Consider the following 331-residue polypeptide: Pyruvate dehydrogenase E1 component subunit beta (331 aa).

Position 60 (E60) interacts with thiamine diphosphate. Residues L113, A161, I162, D164, and N166 each coordinate K(+).

In terms of assembly, heterodimer of an alpha and a beta chain. Thiamine diphosphate serves as cofactor.

The protein resides in the plastid. It localises to the chloroplast. It catalyses the reaction N(6)-[(R)-lipoyl]-L-lysyl-[protein] + pyruvate + H(+) = N(6)-[(R)-S(8)-acetyldihydrolipoyl]-L-lysyl-[protein] + CO2. The pyruvate dehydrogenase complex catalyzes the overall conversion of pyruvate to acetyl-CoA and CO(2). It contains multiple copies of three enzymatic components: pyruvate dehydrogenase (E1), dihydrolipoamide acetyltransferase (E2) and lipoamide dehydrogenase (E3). The sequence is that of Pyruvate dehydrogenase E1 component subunit beta (pdhB) from Porphyra purpurea (Red seaweed).